The chain runs to 2079 residues: von Willebrand factor A domain-containing protein DDB_G0286969 (2079 aa).

The 137-residue stretch at 11–147 (EQILPSFISI…ELEIIITYST (137 aa)) folds into the VIT domain. The segment at 178–203 (NENSTTNTNTQTQPQSVNTTTTTTPS) is disordered. The span at 180–203 (NSTTNTNTQTQPQSVNTTTTTTPS) shows a compositional bias: low complexity. Residues 354 to 525 (ELIFLVDVSE…KVMRQLKRAL (172 aa)) form the VWFA domain. Disordered regions lie at residues 761 to 800 (PTTL…LKTP), 832 to 866 (PFVP…TEVK), 956 to 1139 (AKPV…TKPT), 1155 to 1203 (NEPA…VSST), and 1239 to 1294 (DSNT…ADAE). Low complexity-rich tracts occupy residues 785 to 800 (TTQQ…LKTP), 841 to 866 (PTTT…TEVK), and 956 to 973 (AKPV…QQTK). The stretch at 923 to 957 (EMIKIAEAKAAAEQKAAAEQKAIADAKAAAEQAAK) forms a coiled coil. Positions 974 to 989 (PKADKQSKQNAKDNKQ) are enriched in basic and acidic residues. Positions 992 to 1006 (KPVVVEQKPPVVTET) are enriched in low complexity. Residues 1007-1021 (KPTVATESATPTKPT) are compositionally biased toward polar residues. Positions 1023 to 1061 (AQAAAAAAAAAQQAAQQAAATTPVKQQPTKQTTPNKSTP) are enriched in low complexity. Residues 1092 to 1111 (KPVETKPVEQTKPVETKPVE) are compositionally biased toward basic and acidic residues. A compositionally biased stretch (low complexity) spans 1176-1198 (NNNNNNNNNNNNNNNNNNNNNNN). Positions 1239–1272 (DSNTKAPDSLKTTPIFSNGPQGISPSSGNGSNKS) are enriched in polar residues. Residues 1280-1292 (DRGGRGGRDRNAD) are compositionally biased toward basic and acidic residues. The MIF4G domain occupies 1317-1527 (LKKFKFNLNR…LDLIDLRANK (211 aa)). The disordered stretch occupies residues 1530–1755 (PKNSTQTKTK…PAPVEPVKPK (226 aa)). Composition is skewed to basic and acidic residues over residues 1538–1550 (TKKD…ERFI), 1557–1599 (QKRE…RDAP), and 1621–1634 (NNRD…DRSG). Low complexity-rich tracts occupy residues 1635-1659 (GKQS…LFGS) and 1688-1699 (SSSIPSIPNRSN). Over residues 1725–1740 (SNDRDSRGPSKPDNRK) the composition is skewed to basic and acidic residues. The MI domain occupies 1760–1882 (KIEDDISMTL…PLNYLEEAYA (123 aa)).

This Dictyostelium discoideum (Social amoeba) protein is von Willebrand factor A domain-containing protein DDB_G0286969.